The primary structure comprises 313 residues: uncharacterized protein (313 aa).

Residues H8, H10, E126, H180, H207, and D262 each contribute to the a divalent metal cation site.

This sequence belongs to the metallo-dependent hydrolases superfamily. TatD-type hydrolase family. A divalent metal cation serves as cofactor.

Putative deoxyribonuclease. This is an uncharacterized protein from Saccharomyces cerevisiae (strain ATCC 204508 / S288c) (Baker's yeast).